Consider the following 361-residue polypeptide: Peptide chain release factor 1 (361 aa).

Glutamine 235 carries the post-translational modification N5-methylglutamine.

The protein belongs to the prokaryotic/mitochondrial release factor family. In terms of processing, methylated by PrmC. Methylation increases the termination efficiency of RF1.

It localises to the cytoplasm. In terms of biological role, peptide chain release factor 1 directs the termination of translation in response to the peptide chain termination codons UAG and UAA. This Buchnera aphidicola subsp. Schizaphis graminum (strain Sg) protein is Peptide chain release factor 1.